We begin with the raw amino-acid sequence, 198 residues long: Guanylyl cyclase-activating protein 2 (198 aa).

Gly2 carries N-myristoyl glycine lipidation. EF-hand domains lie at 16 to 51, 52 to 87, 88 to 123, and 139 to 174; these read DVAE…QDNH, EAAE…VLRG, KLEH…IYKL, and TPEE…DKWV. Ca(2+) contacts are provided by Asp65, Asn67, Asp69, Thr71, Glu76, Asp101, Asp103, Asn105, Cys107, Glu112, Asp152, Asn154, Asp156, Gln158, and Glu163.

In terms of assembly, undergoes dimerization at low calcium ions concentration, while the presence of calcium ions inhibits its dimerization. Dimerization correlates with its ability to activate GC. As to expression, retina and pineal gland.

Functionally, stimulates synthesis of cGMP in photoreceptors. Thought to mediate Ca(2+)-sensitive regulation of retinal guanylyl cyclase (GC), a key event in recovery of the dark state of rod photoreceptors following light exposure. The protein is Guanylyl cyclase-activating protein 2 (GUCA1B) of Gallus gallus (Chicken).